Consider the following 431-residue polypeptide: Histidine--tRNA ligase (431 aa).

The tract at residues 1 to 20 is disordered; the sequence is MALQRPKGTQDHLPDGSPKL.

The protein belongs to the class-II aminoacyl-tRNA synthetase family. As to quaternary structure, homodimer.

Its subcellular location is the cytoplasm. The catalysed reaction is tRNA(His) + L-histidine + ATP = L-histidyl-tRNA(His) + AMP + diphosphate + H(+). This is Histidine--tRNA ligase from Deinococcus geothermalis (strain DSM 11300 / CIP 105573 / AG-3a).